The sequence spans 402 residues: Tryptophan--tRNA ligase, cytoplasmic (402 aa).

Residues 97–106 (PSSEALHLGH) carry the 'HIGH' region motif. A 'KMSKS' region motif is present at residues 280 to 284 (KMSAS).

The protein belongs to the class-I aminoacyl-tRNA synthetase family.

It is found in the cytoplasm. Its subcellular location is the cytosol. The catalysed reaction is tRNA(Trp) + L-tryptophan + ATP = L-tryptophyl-tRNA(Trp) + AMP + diphosphate + H(+). The chain is Tryptophan--tRNA ligase, cytoplasmic from Arabidopsis thaliana (Mouse-ear cress).